Here is a 230-residue protein sequence, read N- to C-terminus: Leucyl/phenylalanyl-tRNA--protein transferase (230 aa).

The protein belongs to the L/F-transferase family.

The protein localises to the cytoplasm. The catalysed reaction is N-terminal L-lysyl-[protein] + L-leucyl-tRNA(Leu) = N-terminal L-leucyl-L-lysyl-[protein] + tRNA(Leu) + H(+). It catalyses the reaction N-terminal L-arginyl-[protein] + L-leucyl-tRNA(Leu) = N-terminal L-leucyl-L-arginyl-[protein] + tRNA(Leu) + H(+). The enzyme catalyses L-phenylalanyl-tRNA(Phe) + an N-terminal L-alpha-aminoacyl-[protein] = an N-terminal L-phenylalanyl-L-alpha-aminoacyl-[protein] + tRNA(Phe). Its function is as follows. Functions in the N-end rule pathway of protein degradation where it conjugates Leu, Phe and, less efficiently, Met from aminoacyl-tRNAs to the N-termini of proteins containing an N-terminal arginine or lysine. The sequence is that of Leucyl/phenylalanyl-tRNA--protein transferase from Hamiltonella defensa subsp. Acyrthosiphon pisum (strain 5AT).